A 509-amino-acid polypeptide reads, in one-letter code: Cytochrome P450 4X1 (509 aa).

A helical transmembrane segment spans residues 14-34; that stretch reads FYLAFVFCLALGLLQAIKLYL. A heme-binding site is contributed by Cys454.

The protein belongs to the cytochrome P450 family. Heme is required as a cofactor. As to expression, expressed in brain, heart, kidney and skin and, at lower levels, in skeletal muscle and liver. In the brain, high levels are detected in amygdala and lower levels in globus pallidus and cerebellum. In the heart, very high levels in aorta, but very low levels in other heart regions. Also expressed in breast, prostate and colon.

Its subcellular location is the endoplasmic reticulum membrane. The protein resides in the microsome membrane. The catalysed reaction is N-(5Z,8Z,11Z,14Z-eicosatetraenoyl)-ethanolamine + reduced [NADPH--hemoprotein reductase] + O2 = N-(14,15-epoxy-5Z,8Z,11Z-eicosatrienoyl)-ethanolamine + oxidized [NADPH--hemoprotein reductase] + H2O + H(+). Its function is as follows. A cytochrome P450 monooxygenase that selectively catalyzes the epoxidation of the last double bond of the arachidonoyl moiety of anandamide, potentially modulating endocannabinoid signaling. Has no hydroxylase activity toward various fatty acids, steroids and prostaglandins. Mechanistically, uses molecular oxygen inserting one oxygen atom into a substrate, and reducing the second into a water molecule, with two electrons provided by NADPH via cytochrome P450 reductase (CPR; NADPH-ferrihemoprotein reductase). In Homo sapiens (Human), this protein is Cytochrome P450 4X1.